Consider the following 1078-residue polypeptide: Cell wall acid trehalase ATC1 (1078 aa).

Positions 1 to 54 (MAANSSFFLADNCAPHNQSFIQFCIHAASKKKGRIALMCLANLFLLFSFHLLYA) are cleaved as a signal peptide. 8 N-linked (GlcNAc...) asparagine glycosylation sites follow: asparagine 4, asparagine 17, asparagine 150, asparagine 184, asparagine 242, asparagine 287, asparagine 301, and asparagine 350. 478–479 (WD) provides a ligand contact to substrate. 3 N-linked (GlcNAc...) asparagine glycosylation sites follow: asparagine 532, asparagine 591, and asparagine 601. Glutamate 607 (proton donor) is an active-site residue. Residues asparagine 661 and asparagine 670 are each glycosylated (N-linked (GlcNAc...) asparagine). Residue 676 to 677 (KQ) coordinates substrate. Asparagine 829, asparagine 837, asparagine 904, asparagine 922, asparagine 931, asparagine 946, asparagine 1003, and asparagine 1037 each carry an N-linked (GlcNAc...) asparagine glycan.

Belongs to the glycosyl hydrolase 65 family.

The protein localises to the secreted. Its subcellular location is the cell wall. It catalyses the reaction alpha,alpha-trehalose + H2O = alpha-D-glucose + beta-D-glucose. In terms of biological role, cell wall acid trehalase that catalyzes hydrolysis of the disaccharide trehalose and required for growth on trehalose as carbon source. Plays a role in dimorphic conversion and virulence. In Candida albicans (strain SC5314 / ATCC MYA-2876) (Yeast), this protein is Cell wall acid trehalase ATC1 (ATC1).